The sequence spans 31 residues: Chassatide C5 (31 aa).

Residues 1 to 31 (GVIPCGESCVFIPCISSVVGCSCKNKVCYRN) constitute a cross-link (cyclopeptide (Gly-Asn)). 3 disulfide bridges follow: Cys5–Cys21, Cys9–Cys23, and Cys14–Cys28.

Post-translationally, this is a cyclic peptide. In terms of tissue distribution, expressed in pedicel, root and stem but not in leaf and fruit (at protein level).

Functionally, probably participates in a plant defense mechanism. In Chassalia chartacea (Chassalia curviflora), this protein is Chassatide C5.